The following is a 493-amino-acid chain: Proline--tRNA ligase (493 aa).

It belongs to the class-II aminoacyl-tRNA synthetase family. ProS type 3 subfamily. As to quaternary structure, homodimer.

The protein localises to the cytoplasm. The enzyme catalyses tRNA(Pro) + L-proline + ATP = L-prolyl-tRNA(Pro) + AMP + diphosphate. Functionally, catalyzes the attachment of proline to tRNA(Pro) in a two-step reaction: proline is first activated by ATP to form Pro-AMP and then transferred to the acceptor end of tRNA(Pro). The polypeptide is Proline--tRNA ligase (Azobacteroides pseudotrichonymphae genomovar. CFP2).